Here is a 181-residue protein sequence, read N- to C-terminus: ATP synthase subunit b (181 aa).

Residues 12–32 form a helical membrane-spanning segment; sequence LPAVYDIVWSAVVFVVLLVVI.

This sequence belongs to the ATPase B chain family. As to quaternary structure, F-type ATPases have 2 components, F(1) - the catalytic core - and F(0) - the membrane proton channel. F(1) has five subunits: alpha(3), beta(3), gamma(1), delta(1), epsilon(1). F(0) has three main subunits: a(1), b(2) and c(10-14). The alpha and beta chains form an alternating ring which encloses part of the gamma chain. F(1) is attached to F(0) by a central stalk formed by the gamma and epsilon chains, while a peripheral stalk is formed by the delta and b chains.

The protein resides in the cell membrane. Functionally, f(1)F(0) ATP synthase produces ATP from ADP in the presence of a proton or sodium gradient. F-type ATPases consist of two structural domains, F(1) containing the extramembraneous catalytic core and F(0) containing the membrane proton channel, linked together by a central stalk and a peripheral stalk. During catalysis, ATP synthesis in the catalytic domain of F(1) is coupled via a rotary mechanism of the central stalk subunits to proton translocation. In terms of biological role, component of the F(0) channel, it forms part of the peripheral stalk, linking F(1) to F(0). In Clavibacter sepedonicus (Clavibacter michiganensis subsp. sepedonicus), this protein is ATP synthase subunit b.